A 367-amino-acid chain; its full sequence is Bi-functional coumaroyl CoA and feruloyl CoA ortho-hydroxylase Diox4 (367 aa).

The region spanning Ile-207–Pro-317 is the Fe2OG dioxygenase domain. Residue Tyr-223 participates in 2-oxoglutarate binding. 3 residues coordinate Fe cation: His-238, Asp-240, and His-298. 2 residues coordinate 2-oxoglutarate: Arg-308 and Ser-310.

The protein belongs to the iron/ascorbate-dependent oxidoreductase family. The cofactor is L-ascorbate. Fe(2+) is required as a cofactor.

The catalysed reaction is (E)-4-coumaroyl-CoA + 2-oxoglutarate + O2 = (E)-2,4-dihydroxycinnamoyl-CoA + succinate + CO2. The enzyme catalyses (E)-feruloyl-CoA + 2-oxoglutarate + O2 = (E)-6-hydroxyferuloyl-CoA + succinate + CO2. It functions in the pathway phenylpropanoid metabolism. Its activity is regulated as follows. Repressed by the competitive inhibitor psoralen, but not by umbelliferone, xanthotoxin, bergapten and isopimpinellin. 2-oxoglutarate (OG)- and Fe(II)-dependent dioxygenase (2OGD) involved in scopoletin and umbelliferone biosynthesis. Converts feruloyl CoA into 6'-hydroxyferuloyl CoA, and p-coumaroyl CoA into 2,4-dihydroxycinnamoyl-CoA. Has no activity with cinnamic acid, caffeic acid, p-coumaric acid, ferulic acid, cinnamoyl-CoA and caffeoyl-CoA. The protein is Bi-functional coumaroyl CoA and feruloyl CoA ortho-hydroxylase Diox4 of Ruta graveolens (Common rue).